The sequence spans 375 residues: uncharacterized protein (375 aa).

A compositionally biased stretch (basic residues) spans 1-12; the sequence is MAGNKKQVKKNT. 2 disordered regions span residues 1–76 and 119–274; these read MAGN…EKKS and KNKN…KEIK. Polar residues predominate over residues 26-39; sequence DTSNLDTAVQTSAS. Residues 129–141 are compositionally biased toward low complexity; the sequence is TATDGTTTTTNIP. A compositionally biased stretch (basic and acidic residues) spans 175 to 185; the sequence is DETHSHKEEPK. Composition is skewed to low complexity over residues 198–212 and 225–241; these read SKQQ…SSSS and PTPT…KSTP. Basic and acidic residues predominate over residues 256–274; the sequence is EQPKEKSSPAPVKKEKEIK. 2 helical membrane passes run 299–319 and 327–347; these read VVYK…LVPL and IYSY…TLFI. The disordered stretch occupies residues 355–375; the sequence is ASKEQKSKSGNKKSTTRKVKA. The segment covering 363 to 375 has biased composition (basic residues); it reads SGNKKSTTRKVKA.

It is found in the membrane. This is an uncharacterized protein from Dictyostelium discoideum (Social amoeba).